The chain runs to 228 residues: Tungstate uptake system permease protein TupB (228 aa).

Transmembrane regions (helical) follow at residues 25–45, 65–85, 102–122, 144–164, and 203–223; these read IIFL…AVSI, VLYS…AIGL, AMII…TYSL, VIIL…VTTF, and MAIA…AVIY. One can recognise an ABC transmembrane type-1 domain in the interval 26–222; the sequence is IFLSVFVSST…MISFAINAVI (197 aa).

The protein belongs to the binding-protein-dependent transport system permease family. As to quaternary structure, the complex is composed of two ATP-binding proteins (TupC), two transmembrane proteins (TupB) and a solute-binding protein (TupA).

It is found in the cell membrane. Part of an ABC transporter complex involved in tungstate uptake. Probably responsible for the translocation of the substrate across the membrane. In Peptoclostridium acidaminophilum (Eubacterium acidaminophilum), this protein is Tungstate uptake system permease protein TupB.